Consider the following 377-residue polypeptide: P2Y purinoceptor 2 (377 aa).

Residues 1-32 (MAADLGPWNDTINGTWDGDELGYRCRFNEDFK) are Extracellular-facing. Residues asparagine 9 and asparagine 13 are each glycosylated (N-linked (GlcNAc...) asparagine). Residues 33-59 (YVLLPVSYGVVCVPGLCLNAVALYIFL) traverse the membrane as a helical segment. Topologically, residues 60 to 70 (CRLKTWNASTT) are cytoplasmic. A helical membrane pass occupies residues 71 to 93 (YMFHLAVSDALYAASLPLLVYYY). At 94-110 (ARGDHWPFSTVLCKLVR) the chain is on the extracellular side. The cysteines at positions 106 and 183 are disulfide-linked. A helical transmembrane segment spans residues 111–129 (FLFYTNLYCSILFLTCISV). Over 130 to 152 (HRCLGVLRPLRSLRWGRARYARR) the chain is Cytoplasmic. A helical transmembrane segment spans residues 153-172 (VAGAVWVLVLACQAPVLYFV). Residues 173–194 (TTSARGGRVTCHDTSAPELFSR) lie on the Extracellular side of the membrane. The helical transmembrane segment at 195 to 220 (FVAYSSVMLGLLFAVPFAVILVCYVL) threads the bilayer. Topologically, residues 221 to 246 (MARRLLKPAYGTSGGLPRAKRKSVRT) are cytoplasmic. A helical membrane pass occupies residues 247–269 (IAVVLAVFALCFLPFHVTRTLYY). At 270–287 (SFRSLDLSCHTLNAINMA) the chain is on the extracellular side. A helical transmembrane segment spans residues 288–309 (YKVTRPLASANSCLDPVLYFLA). The Cytoplasmic portion of the chain corresponds to 310–377 (GQRLVRFARD…GSENTKDIRL (68 aa)). The interval 318–377 (RDAKPPTGPSPATPARRRLGLRRSDRTDMQRIEDVLGSSEDSRRTESTPAGSENTKDIRL) is disordered. Positions 339 to 363 (RRSDRTDMQRIEDVLGSSEDSRRTE) are enriched in basic and acidic residues.

The protein belongs to the G-protein coupled receptor 1 family. In terms of tissue distribution, spleen, testis, kidney, liver, lung, heart and brain.

The protein resides in the cell membrane. Its function is as follows. Receptor for ATP and UTP coupled to G-proteins that activate a phosphatidylinositol-calcium second messenger system. The affinity range is UTP = ATP &gt; ATP-gamma-S &gt;&gt; 2-methylthio-ATP = ADP. The chain is P2Y purinoceptor 2 (P2RY2) from Homo sapiens (Human).